Reading from the N-terminus, the 625-residue chain is Chaperone protein HtpG (625 aa).

The interval 1–332 (MSKKTNAPVQ…TEDLSLNVSR (332 aa)) is a; substrate-binding. A b region spans residues 333-545 (EVVQSSPVMA…KDAMDSQMER (213 aa)). The tract at residues 546–625 (MMKMMQQEMP…ELIEAATLSR (80 aa)) is c.

It belongs to the heat shock protein 90 family. In terms of assembly, homodimer.

Its subcellular location is the cytoplasm. Functionally, molecular chaperone. Has ATPase activity. The chain is Chaperone protein HtpG from Chlorobium phaeovibrioides (strain DSM 265 / 1930) (Prosthecochloris vibrioformis (strain DSM 265)).